A 323-amino-acid chain; its full sequence is Ribonuclease Z (323 aa).

Zn(2+)-binding residues include H62, H64, D66, H67, H144, D215, and H273. Catalysis depends on D66, which acts as the Proton acceptor.

It belongs to the RNase Z family. Homodimer. Zn(2+) serves as cofactor.

The catalysed reaction is Endonucleolytic cleavage of RNA, removing extra 3' nucleotides from tRNA precursor, generating 3' termini of tRNAs. A 3'-hydroxy group is left at the tRNA terminus and a 5'-phosphoryl group is left at the trailer molecule.. In terms of biological role, zinc phosphodiesterase, which displays some tRNA 3'-processing endonuclease activity. Probably involved in tRNA maturation, by removing a 3'-trailer from precursor tRNA. This chain is Ribonuclease Z, found in Synechococcus sp. (strain WH7803).